We begin with the raw amino-acid sequence, 260 residues long: Thiamine thiazole synthase (260 aa).

NAD(+) contacts are provided by residues alanine 36, 55–56, glycine 63, and 154–156; these read EQ and HVD. Residues aspartate 156 and histidine 171 each contribute to the Fe cation site. Methionine 224 contributes to the NAD(+) binding site. Arginine 234 serves as a coordination point for glycine.

Belongs to the THI4 family. As to quaternary structure, homooctamer; tetramer of dimers. Fe(2+) is required as a cofactor.

It carries out the reaction hydrogen sulfide + glycine + NAD(+) = ADP-5-ethyl-4-methylthiazole-2-carboxylate + nicotinamide + 3 H2O + H(+). Its pathway is cofactor biosynthesis; thiamine diphosphate biosynthesis. Functionally, involved in the biosynthesis of the thiazole moiety of thiamine. Catalyzes the conversion of NAD and glycine to adenosine diphosphate 5-(2-hydroxyethyl)-4-methylthiazole-2-carboxylate (ADT), an adenylated thiazole intermediate, using free sulfide as a source of sulfur. This Methanosarcina barkeri (strain Fusaro / DSM 804) protein is Thiamine thiazole synthase.